We begin with the raw amino-acid sequence, 143 residues long: Large ribosomal subunit protein uL13 (143 aa).

The protein belongs to the universal ribosomal protein uL13 family. In terms of assembly, part of the 50S ribosomal subunit.

Its function is as follows. This protein is one of the early assembly proteins of the 50S ribosomal subunit, although it is not seen to bind rRNA by itself. It is important during the early stages of 50S assembly. The sequence is that of Large ribosomal subunit protein uL13 from Dehalococcoides mccartyi (strain CBDB1).